Consider the following 111-residue polypeptide: Auxin-repressed 12.5 kDa protein (111 aa).

The interval 18–111 (ERGLGMLRKV…SGETRSKHHR (94 aa)) is disordered. The span at 43–57 (TMPTTPTTPVTPTTP) shows a compositional bias: low complexity. The span at 74–95 (SNLSSKTMGNQVFDSPQPNSPT) shows a compositional bias: polar residues.

Belongs to the DRM1/ARP family.

In Fragaria ananassa (Strawberry), this protein is Auxin-repressed 12.5 kDa protein.